A 37-amino-acid polypeptide reads, in one-letter code: Cytochrome b6-f complex subunit 5 (37 aa).

The chain crosses the membrane as a helical span at residues 5–25 (FLFGIVLGLIPVTLAGLFVTA).

This sequence belongs to the PetG family. As to quaternary structure, the 4 large subunits of the cytochrome b6-f complex are cytochrome b6, subunit IV (17 kDa polypeptide, PetD), cytochrome f and the Rieske protein, while the 4 small subunits are PetG, PetL, PetM and PetN. The complex functions as a dimer.

Its subcellular location is the plastid. The protein localises to the chloroplast thylakoid membrane. Its function is as follows. Component of the cytochrome b6-f complex, which mediates electron transfer between photosystem II (PSII) and photosystem I (PSI), cyclic electron flow around PSI, and state transitions. PetG is required for either the stability or assembly of the cytochrome b6-f complex. The sequence is that of Cytochrome b6-f complex subunit 5 from Daucus carota (Wild carrot).